A 547-amino-acid chain; its full sequence is Delta-guaiene synthase 3 (547 aa).

Positions 299, 303, and 444 each coordinate Mg(2+). The DDXXD motif motif lies at 299–303 (DDTYD).

It belongs to the terpene synthase family. Requires Mg(2+) as cofactor.

It catalyses the reaction (2E,6E)-farnesyl diphosphate = delta-guaiene + diphosphate. The enzyme catalyses (2E,6E)-farnesyl diphosphate = alpha-guaiene + diphosphate. Its pathway is secondary metabolite biosynthesis; terpenoid biosynthesis. In terms of biological role, sesquiterpene synthase involved in the biosynthesis of delta-guaiene (78.2%) and alpha-guaiene (20.9%), two structures composed of five- and seven-membered rings. Also produces 0.9% of alpha-humulene. The sequence is that of Delta-guaiene synthase 3 (C4) from Aquilaria crassna (Eagle wood).